A 124-amino-acid polypeptide reads, in one-letter code: Small ribosomal subunit protein uS12 (124 aa).

3-methylthioaspartic acid is present on D89. The tract at residues 105 to 124 (QGVKNRKQARSRYGAKKEKS) is disordered. A compositionally biased stretch (basic residues) spans 108-118 (KNRKQARSRYG).

The protein belongs to the universal ribosomal protein uS12 family. In terms of assembly, part of the 30S ribosomal subunit. Contacts proteins S8 and S17. May interact with IF1 in the 30S initiation complex.

Its function is as follows. With S4 and S5 plays an important role in translational accuracy. Functionally, interacts with and stabilizes bases of the 16S rRNA that are involved in tRNA selection in the A site and with the mRNA backbone. Located at the interface of the 30S and 50S subunits, it traverses the body of the 30S subunit contacting proteins on the other side and probably holding the rRNA structure together. The combined cluster of proteins S8, S12 and S17 appears to hold together the shoulder and platform of the 30S subunit. This Mycobacterium leprae (strain Br4923) protein is Small ribosomal subunit protein uS12.